Reading from the N-terminus, the 409-residue chain is Aspartic protease pepA (409 aa).

A signal peptide spans 1 to 19 (MPSIVSLTAALTFVGAVIA). The propeptide at 20–65 (SPVEKRSAFSVEQVPHTTYLKNGPAQKVKTLRKYGKPVPQSLLDAA) is activation peptide. The Peptidase A1 domain occupies 97 to 404 (YLSPVTVGST…PDSPPRIGLA (308 aa)). Catalysis depends on residues D113 and D293. A disulfide bond links C329 and C364. N335 carries N-linked (GlcNAc...) asparagine glycosylation.

This sequence belongs to the peptidase A1 family. As to quaternary structure, monomer.

It is found in the secreted. Its function is as follows. Secreted aspartic endopeptidase that allows assimilation of proteinaceous substrates. The scissile peptide bond is attacked by a nucleophilic water molecule activated by two aspartic residues in the active site. Shows a broad primary substrate specificity. Favors hydrophobic residues at the P1 and P1' positions. The chain is Aspartic protease pepA from Leptosphaeria maculans (strain JN3 / isolate v23.1.3 / race Av1-4-5-6-7-8) (Blackleg fungus).